A 270-amino-acid chain; its full sequence is ATP synthase subunit a (270 aa).

Transmembrane regions (helical) follow at residues V29–V49, I87–F107, P108–P128, D140–I160, P182–A202, L220–W240, and A241–V261.

Belongs to the ATPase A chain family. F-type ATPases have 2 components, CF(1) - the catalytic core - and CF(0) - the membrane proton channel. CF(1) has five subunits: alpha(3), beta(3), gamma(1), delta(1), epsilon(1). CF(0) has three main subunits: a(1), b(2) and c(9-12). The alpha and beta chains form an alternating ring which encloses part of the gamma chain. CF(1) is attached to CF(0) by a central stalk formed by the gamma and epsilon chains, while a peripheral stalk is formed by the delta and b chains.

Its subcellular location is the cell inner membrane. In terms of biological role, key component of the proton channel; it plays a direct role in the translocation of protons across the membrane. The polypeptide is ATP synthase subunit a (Chromobacterium violaceum (strain ATCC 12472 / DSM 30191 / JCM 1249 / CCUG 213 / NBRC 12614 / NCIMB 9131 / NCTC 9757 / MK)).